Here is a 55-residue protein sequence, read N- to C-terminus: Ferredoxin-1 (55 aa).

4Fe-4S ferredoxin-type domains follow at residues 2-27 (YKIE…EQGD) and 28-55 (TIFV…PVAE). C8, C11, C14, C18, C37, C40, C43, and C47 together coordinate [4Fe-4S] cluster.

[4Fe-4S] cluster is required as a cofactor.

Ferredoxins are iron-sulfur proteins that transfer electrons in a wide variety of metabolic reactions. The protein is Ferredoxin-1 of Rhodospirillum rubrum.